Here is a 378-residue protein sequence, read N- to C-terminus: Anhydro-N-acetylmuramic acid kinase (378 aa).

Position 23-30 (23-30) interacts with ATP; sequence GTSMDGAD.

It belongs to the anhydro-N-acetylmuramic acid kinase family.

It catalyses the reaction 1,6-anhydro-N-acetyl-beta-muramate + ATP + H2O = N-acetyl-D-muramate 6-phosphate + ADP + H(+). The protein operates within amino-sugar metabolism; 1,6-anhydro-N-acetylmuramate degradation. It participates in cell wall biogenesis; peptidoglycan recycling. In terms of biological role, catalyzes the specific phosphorylation of 1,6-anhydro-N-acetylmuramic acid (anhMurNAc) with the simultaneous cleavage of the 1,6-anhydro ring, generating MurNAc-6-P. Is required for the utilization of anhMurNAc either imported from the medium or derived from its own cell wall murein, and thus plays a role in cell wall recycling. The sequence is that of Anhydro-N-acetylmuramic acid kinase from Bordetella bronchiseptica (strain ATCC BAA-588 / NCTC 13252 / RB50) (Alcaligenes bronchisepticus).